The primary structure comprises 345 residues: Variable large protein 23 (345 aa).

An N-terminal signal peptide occupies residues methionine 1–serine 18. The N-palmitoyl cysteine moiety is linked to residue cysteine 19. The S-diacylglycerol cysteine moiety is linked to residue cysteine 19.

The protein belongs to the variable large protein (Vlp) family. Delta subfamily.

The protein localises to the cell outer membrane. Functionally, the Vlp and Vsp proteins are antigenically distinct proteins, only one vlp or vsp gene is transcriptionally active at any one time. Switching between these genes is a mechanism of host immune response evasion. This is Variable large protein 23 from Borrelia hermsii.